We begin with the raw amino-acid sequence, 439 residues long: Agnestins biosynthesis cluster transcriptional coactivator AgnL9 (439 aa).

Positions 79 to 149 (MTIQTQLLAC…EPGHITHSAL (71 aa)) constitute an HTH iclR-type domain. The segment at residues 109–128 (MKDVSELIDVPENQLGRIVR) is a DNA-binding region (H-T-H motif).

Its subcellular location is the nucleus. Transcriptional coactivator; part of the gene cluster that mediates the biosynthesis of agnestins, dihydroxy-xanthone metabolites. This Paecilomyces divaricatus (Penicillium divaricatum) protein is Agnestins biosynthesis cluster transcriptional coactivator AgnL9.